The chain runs to 464 residues: Siroheme synthase (464 aa).

Positions 1-203 are precorrin-2 dehydrogenase /sirohydrochlorin ferrochelatase; the sequence is MEYLPLFHNL…GQGAEAERLL (203 aa). NAD(+) contacts are provided by residues 22–23 and 43–44; these read EI and PE. Ser-128 bears the Phosphoserine mark. The interval 216–464 is uroporphyrinogen-III C-methyltransferase; the sequence is GEVYLVGAGP…AWFEGAQSEV (249 aa). Pro-225 provides a ligand contact to S-adenosyl-L-methionine. Asp-248 (proton acceptor) is an active-site residue. The Proton donor role is filled by Lys-270. Residues 301–303, Ile-306, 331–332, Met-383, and Gly-412 contribute to the S-adenosyl-L-methionine site; these read GGD and TA.

This sequence in the N-terminal section; belongs to the precorrin-2 dehydrogenase / sirohydrochlorin ferrochelatase family. It in the C-terminal section; belongs to the precorrin methyltransferase family.

It carries out the reaction uroporphyrinogen III + 2 S-adenosyl-L-methionine = precorrin-2 + 2 S-adenosyl-L-homocysteine + H(+). The enzyme catalyses precorrin-2 + NAD(+) = sirohydrochlorin + NADH + 2 H(+). The catalysed reaction is siroheme + 2 H(+) = sirohydrochlorin + Fe(2+). Its pathway is cofactor biosynthesis; adenosylcobalamin biosynthesis; precorrin-2 from uroporphyrinogen III: step 1/1. The protein operates within cofactor biosynthesis; adenosylcobalamin biosynthesis; sirohydrochlorin from precorrin-2: step 1/1. It functions in the pathway porphyrin-containing compound metabolism; siroheme biosynthesis; precorrin-2 from uroporphyrinogen III: step 1/1. It participates in porphyrin-containing compound metabolism; siroheme biosynthesis; siroheme from sirohydrochlorin: step 1/1. Its pathway is porphyrin-containing compound metabolism; siroheme biosynthesis; sirohydrochlorin from precorrin-2: step 1/1. Multifunctional enzyme that catalyzes the SAM-dependent methylations of uroporphyrinogen III at position C-2 and C-7 to form precorrin-2 via precorrin-1. Then it catalyzes the NAD-dependent ring dehydrogenation of precorrin-2 to yield sirohydrochlorin. Finally, it catalyzes the ferrochelation of sirohydrochlorin to yield siroheme. The polypeptide is Siroheme synthase (Pseudomonas fluorescens (strain ATCC BAA-477 / NRRL B-23932 / Pf-5)).